We begin with the raw amino-acid sequence, 230 residues long: Lipopolysaccharide core heptose(II) kinase WaaY (230 aa).

It belongs to the protein kinase superfamily. RfaY/WaaY family.

It carries out the reaction alpha-D-Glc-(1-&gt;3)-[L-alpha-D-Hep-(1-&gt;7)]-L-alpha-D-Hep-(1-&gt;3)-4-O-PO3(2-)-L-alpha-D-Hep-(1-&gt;5)-[alpha-Kdo-(2-&gt;4)]-alpha-Kdo-(2-&gt;6)-lipid A + ATP = alpha-D-Glc-(1-&gt;3)-[L-alpha-D-Hep-(1-&gt;7)]-4-O-PO3(2-)-L-alpha-D-Hep-(1-&gt;3)-4-O-PO3(2-)-L-alpha-D-Hep-(1-&gt;5)-[alpha-Kdo-(2-&gt;4)]-alpha-Kdo-(2-&gt;6)-lipid A + ADP + H(+). It participates in bacterial outer membrane biogenesis; LPS core biosynthesis. Its function is as follows. Kinase involved in the biosynthesis of the core oligosaccharide region of lipopolysaccharide (LPS). Catalyzes the phosphorylation of the second heptose unit (HepII) of the inner core. This Escherichia coli protein is Lipopolysaccharide core heptose(II) kinase WaaY.